The following is a 539-amino-acid chain: uncharacterized protein (539 aa).

ABC transporter domains follow at residues valine 8 to leucine 265 and isoleucine 307 to methionine 537. ATP is bound at residue glycine 339–serine 346.

It belongs to the ABC transporter superfamily.

It localises to the mitochondrion. This is an uncharacterized protein from Saccharomyces cerevisiae (strain ATCC 204508 / S288c) (Baker's yeast).